Reading from the N-terminus, the 137-residue chain is Nucleoside diphosphate kinase (137 aa).

Residues K9, F57, R85, T91, R102, and N112 each contribute to the ATP site. The Pros-phosphohistidine intermediate role is filled by H115.

The protein belongs to the NDK family. In terms of assembly, homotetramer. Requires Mg(2+) as cofactor.

It localises to the cytoplasm. It catalyses the reaction a 2'-deoxyribonucleoside 5'-diphosphate + ATP = a 2'-deoxyribonucleoside 5'-triphosphate + ADP. The enzyme catalyses a ribonucleoside 5'-diphosphate + ATP = a ribonucleoside 5'-triphosphate + ADP. Major role in the synthesis of nucleoside triphosphates other than ATP. The ATP gamma phosphate is transferred to the NDP beta phosphate via a ping-pong mechanism, using a phosphorylated active-site intermediate. This chain is Nucleoside diphosphate kinase, found in Thermus thermophilus (strain ATCC BAA-163 / DSM 7039 / HB27).